We begin with the raw amino-acid sequence, 233 residues long: Large ribosomal subunit protein uL1 (233 aa).

This sequence belongs to the universal ribosomal protein uL1 family. In terms of assembly, part of the 50S ribosomal subunit.

Binds directly to 23S rRNA. The L1 stalk is quite mobile in the ribosome, and is involved in E site tRNA release. In terms of biological role, protein L1 is also a translational repressor protein, it controls the translation of the L11 operon by binding to its mRNA. In Shewanella woodyi (strain ATCC 51908 / MS32), this protein is Large ribosomal subunit protein uL1.